The primary structure comprises 230 residues: Probable dual specificity protein phosphatase DDB_G0283417 (230 aa).

The 153-residue stretch at 78–230 (NNNYESINLY…LEIFEKELLF (153 aa)) folds into the Tyrosine-protein phosphatase domain. Catalysis depends on C174, which acts as the Phosphocysteine intermediate.

This sequence belongs to the protein-tyrosine phosphatase family. Non-receptor class dual specificity subfamily.

The catalysed reaction is O-phospho-L-tyrosyl-[protein] + H2O = L-tyrosyl-[protein] + phosphate. It carries out the reaction O-phospho-L-seryl-[protein] + H2O = L-seryl-[protein] + phosphate. The enzyme catalyses O-phospho-L-threonyl-[protein] + H2O = L-threonyl-[protein] + phosphate. Its function is as follows. Has a dual specificity toward Ser/Thr and Tyr-containing proteins. The chain is Probable dual specificity protein phosphatase DDB_G0283417 from Dictyostelium discoideum (Social amoeba).